A 153-amino-acid chain; its full sequence is Ribonuclease H (153 aa).

Residues 1-142 (MTPEVVIYTD…ADALARKGLS (142 aa)) form the RNase H type-1 domain. Residues D10, E48, D70, and D134 each coordinate Mg(2+).

This sequence belongs to the RNase H family. In terms of assembly, monomer. It depends on Mg(2+) as a cofactor.

The protein resides in the cytoplasm. It carries out the reaction Endonucleolytic cleavage to 5'-phosphomonoester.. Functionally, endonuclease that specifically degrades the RNA of RNA-DNA hybrids. The protein is Ribonuclease H of Phenylobacterium zucineum (strain HLK1).